The following is a 472-amino-acid chain: Ribulose bisphosphate carboxylase/oxygenase activase, chloroplastic (472 aa).

The N-terminal 58 residues, 1 to 58 (MATAVSTVGAATRAPLNLNGSSAGASVPTSGFLGSSLKKHTNVRFPSSSRTTSMTVKA), are a transit peptide targeting the chloroplast. 163–170 (GGKGQGKS) lines the ATP pocket. The interval 448 to 472 (GCTDPEAKNYDPTARSDDGSCTYNL) is disordered. A compositionally biased stretch (basic and acidic residues) spans 452–465 (PEAKNYDPTARSDD).

It belongs to the RuBisCO activase family.

It localises to the plastid. It is found in the chloroplast stroma. Functionally, activation of RuBisCO (ribulose-1,5-bisphosphate carboxylase/oxygenase; EC 4.1.1.39) involves the ATP-dependent carboxylation of the epsilon-amino group of lysine leading to a carbamate structure. This chain is Ribulose bisphosphate carboxylase/oxygenase activase, chloroplastic, found in Spinacia oleracea (Spinach).